A 274-amino-acid chain; its full sequence is Acyl-coenzyme A diphosphatase YFT2 (274 aa).

Residues 1 to 11 (MIRQLNYWSRK) are Cytoplasmic-facing. A helical membrane pass occupies residues 12-32 (AYLIYPFQVFVGALLSIVVSS). The Lumenal segment spans residues 33 to 60 (ETLNHQKETCALLKSSNIFNVIFAYKAN). The helical transmembrane segment at 61 to 81 (QLWPFLFFSLAFLQIYFHYLA) threads the bilayer. The Cytoplasmic segment spans residues 82 to 124 (RMDILPLPISSTETSSSYLTYTNHWPLLKNRIISIMITQYACK). Residues 125-145 (FVLKYLLLFLNFQFIDHVFIW) form a helical membrane-spanning segment. Residues 146-170 (TGGECSSGSKTTSAEKCRLENGKWD) are Lumenal-facing. Residues 171–191 (GGFDISGHFCFLVSISMILWM) form a helical membrane-spanning segment. The active site involves histidine 178. The Cytoplasmic segment spans residues 192–215 (ELHLFSRFVQAEDMFWVVNKWVRA). The chain crosses the membrane as a helical span at residues 216 to 236 (CLAIVCAVLVIWICILWVTAI). Topologically, residues 237-247 (YYHTILEKVLG) are lumenal. Histidine 239 is a catalytic residue. A helical membrane pass occupies residues 248–268 (CLMGFICPVFIYHILPKIGIL). At 269–274 (HNYLYL) the chain is on the cytoplasmic side.

The protein belongs to the FIT family. Yeast FIT2A/YFT2 subfamily.

It localises to the endoplasmic reticulum membrane. The protein resides in the vacuole. The enzyme catalyses an acyl-CoA + H2O = an acyl-4'-phosphopantetheine + adenosine 3',5'-bisphosphate + 2 H(+). It catalyses the reaction (9Z)-octadecenoyl-CoA + H2O = S-(9Z-octadecenoyl)-4'-phosphopantetheine + adenosine 3',5'-bisphosphate + 2 H(+). It carries out the reaction (5Z,8Z,11Z,14Z)-eicosatetraenoyl-CoA + H2O = S-(5Z,8Z,11Z,14Z-eicosatetraenoyl)-4'-phosphopantetheine + adenosine 3',5'-bisphosphate + 2 H(+). The catalysed reaction is hexadecanoyl-CoA + H2O = S-hexadecanoyl-4'-phosphopantetheine + adenosine 3',5'-bisphosphate + 2 H(+). In terms of biological role, fatty acyl-coenzyme A (CoA) diphosphatase that hydrolyzes fatty acyl-CoA to yield acyl-4'-phosphopantetheine and adenosine 3',5'-bisphosphate. Preferentially hydrolyzes unsaturated long-chain acyl-CoA substrates in the endoplasmic reticulum (ER) lumen. This catalytic activity is required for maintaining ER structure and for lipid droplets (LDs) biogenesis, which are lipid storage organelles involved in maintaining lipid and energy homeostasis. May directly bind to diacylglycerol (DAGs) and triacylglycerol, which is also important for LD biogenesis. May support directional budding of nacent LDs from the ER into the cytosol by reducing DAG levels at sites of LD formation. May play a role in the regulation of cell morphology and cytoskeletal organization. Involved in phospholipid biosynthesis. This Saccharomyces cerevisiae (strain ATCC 204508 / S288c) (Baker's yeast) protein is Acyl-coenzyme A diphosphatase YFT2.